Here is a 309-residue protein sequence, read N- to C-terminus: MIAKYIIKHGLELAYDIKADAFMIFTETGKSYELLKSFLKKDEHSGIIKILDKISHKNVKIIVATPNQVTYKKISSENEENIYPIFIKHREDNRCMIISSGIVHALKMKILKENNKIVAVVGEPKTPGKLDTIMVVNVKEHVKTITLYELFETLDEKQKRTLKEIIKLAMEIGREGREGEYVGTIFVMGDTLNVMSMSKPLILNPFAGHNASIFDENVKGTIKELSSIDGAFIITDEGKVVSAGRFLEIKGDVNIPKGLGARHLAAASISKNTNAIAVTVSQSGGIVRVFKDGKIVFETDPRANILFFD.

The DAC domain occupies 144 to 301; the sequence is TITLYELFET…DGKIVFETDP (158 aa).

The protein belongs to the adenylate cyclase family. DacZ subfamily. It depends on Mn(2+) as a cofactor.

It carries out the reaction 2 ATP = 3',3'-c-di-AMP + 2 diphosphate. Its function is as follows. Diadenylate cyclase that catalyzes the condensation of 2 ATP molecules into cyclic di-AMP (c-di-AMP). c-di-AMP is a second messenger for intracellular signal transduction involved in the control of important regulatory processes such as osmoregulation. The polypeptide is Diadenylate cyclase (Methanocaldococcus jannaschii (strain ATCC 43067 / DSM 2661 / JAL-1 / JCM 10045 / NBRC 100440) (Methanococcus jannaschii)).